Reading from the N-terminus, the 698-residue chain is Putative transposon gamma-delta 80.3 kDa protein (698 aa).

The protein is Putative transposon gamma-delta 80.3 kDa protein (tnpX) of Escherichia coli (strain K12).